The chain runs to 528 residues: GMP synthase [glutamine-hydrolyzing] (528 aa).

A Glutamine amidotransferase type-1 domain is found at 13–204; it reads SILILDFGSQ…VYGISSCVAD (192 aa). Residue Cys-90 is the Nucleophile of the active site. Residues His-178 and Glu-180 contribute to the active site. The 199-residue stretch at 205–403 folds into the GMPS ATP-PPase domain; the sequence is WTTETYIEET…LGLPDEIIKR (199 aa). 232–238 provides a ligand contact to ATP; that stretch reads SGGVDSS.

As to quaternary structure, homodimer.

It carries out the reaction XMP + L-glutamine + ATP + H2O = GMP + L-glutamate + AMP + diphosphate + 2 H(+). The protein operates within purine metabolism; GMP biosynthesis; GMP from XMP (L-Gln route): step 1/1. Catalyzes the synthesis of GMP from XMP. This chain is GMP synthase [glutamine-hydrolyzing], found in Prochlorococcus marinus (strain MIT 9312).